The chain runs to 205 residues: dITP/XTP pyrophosphatase (205 aa).

8–13 (SGNKGK) is a substrate binding site. Residue Asp69 is the Proton acceptor of the active site. Residue Asp69 participates in Mg(2+) binding. Residues Ser70, 153 to 156 (HGYD), Lys176, and 181 to 182 (HR) each bind substrate.

It belongs to the HAM1 NTPase family. In terms of assembly, homodimer. The cofactor is Mg(2+).

The catalysed reaction is XTP + H2O = XMP + diphosphate + H(+). It catalyses the reaction dITP + H2O = dIMP + diphosphate + H(+). The enzyme catalyses ITP + H2O = IMP + diphosphate + H(+). Its function is as follows. Pyrophosphatase that catalyzes the hydrolysis of nucleoside triphosphates to their monophosphate derivatives, with a high preference for the non-canonical purine nucleotides XTP (xanthosine triphosphate), dITP (deoxyinosine triphosphate) and ITP. Seems to function as a house-cleaning enzyme that removes non-canonical purine nucleotides from the nucleotide pool, thus preventing their incorporation into DNA/RNA and avoiding chromosomal lesions. The protein is dITP/XTP pyrophosphatase of Shewanella oneidensis (strain ATCC 700550 / JCM 31522 / CIP 106686 / LMG 19005 / NCIMB 14063 / MR-1).